The following is a 193-amino-acid chain: dTTP/UTP pyrophosphatase (193 aa).

Aspartate 71 serves as the catalytic Proton acceptor.

Belongs to the Maf family. YhdE subfamily. It depends on a divalent metal cation as a cofactor.

The protein resides in the cytoplasm. It catalyses the reaction dTTP + H2O = dTMP + diphosphate + H(+). The enzyme catalyses UTP + H2O = UMP + diphosphate + H(+). Its function is as follows. Nucleoside triphosphate pyrophosphatase that hydrolyzes dTTP and UTP. May have a dual role in cell division arrest and in preventing the incorporation of modified nucleotides into cellular nucleic acids. The sequence is that of dTTP/UTP pyrophosphatase from Citrifermentans bemidjiense (strain ATCC BAA-1014 / DSM 16622 / JCM 12645 / Bem) (Geobacter bemidjiensis).